The following is a 305-amino-acid chain: Coenzyme PQQ synthesis protein B (305 aa).

It belongs to the PqqB family.

It functions in the pathway cofactor biosynthesis; pyrroloquinoline quinone biosynthesis. Its function is as follows. May be involved in the transport of PQQ or its precursor to the periplasm. This Cupriavidus taiwanensis (strain DSM 17343 / BCRC 17206 / CCUG 44338 / CIP 107171 / LMG 19424 / R1) (Ralstonia taiwanensis (strain LMG 19424)) protein is Coenzyme PQQ synthesis protein B.